The primary structure comprises 296 residues: MMDSSEHDYYEYFDEFRGILLYKQFIKYWDNVEAFQARPDDLVIAAYPKSGTTWISEVVCMIYAEGDVKKCRQDAIFNRVPFLECRNDKMMNGVKQLEEMNSPRIIKTHLPPRLLPASFWEKRCKMICICRNAKDVAVSYYYFFLMVANHPDPGSFPEFVEKFMQGQVPYGSWYDHVKSWWEKSTDPRILFIFYEDMKEDIRKEVLKLIHFLGRKPSEELVDKIIKHTSFQEMKNNPSTNYTMLPEEIMNQKVSPFMRKGISGDWKNHFTVALNESFDKHYQQQMKGSTLQLRTEI.

49–54 serves as a coordination point for 3'-phosphoadenylyl sulfate; sequence KSGTTW. 107 to 109 contacts substrate; the sequence is KTH. H109 acts as the Proton acceptor in catalysis. 3'-phosphoadenylyl sulfate-binding positions include R131, S139, Y194, 228–233, and 258–260; these read TSFQEM and RKG.

The protein belongs to the sulfotransferase 1 family. Homodimer. The N-terminus is blocked. In terms of tissue distribution, adrenal gland and much less in liver. Detectable only during pregnancy in uterine.

It localises to the cytoplasm. The protein localises to the cytosol. It carries out the reaction estrone + 3'-phosphoadenylyl sulfate = estrone 3-sulfate + adenosine 3',5'-bisphosphate + H(+). It catalyses the reaction (24S)-hydroxycholesterol + 3'-phosphoadenylyl sulfate = (24S)-hydroxycholesterol 3-sulfate + adenosine 3',5'-bisphosphate + H(+). The enzyme catalyses 17beta-estradiol + 3'-phosphoadenylyl sulfate = 17beta-estradiol 3-sulfate + adenosine 3',5'-bisphosphate + H(+). The catalysed reaction is 3beta-hydroxyandrost-5-en-17-one + 3'-phosphoadenylyl sulfate = dehydroepiandrosterone 3-sulfate + adenosine 3',5'-bisphosphate + H(+). It carries out the reaction 4-ethylphenol + 3'-phosphoadenylyl sulfate = 4-ethylphenyl sulfate + adenosine 3',5'-bisphosphate + H(+). With respect to regulation, inhibited by estradiol. Sulfotransferase that utilizes 3'-phospho-5'-adenylyl sulfate (PAPS) as sulfonate donor to catalyze the sulfate conjugation of estradiol and estrone. Is a key enzyme in estrogen homeostasis, the sulfation of estrogens leads to their inactivation. Also sulfates dehydroepiandrosterone (DHEA), pregnenolone, (24S)-hydroxycholesteroland xenobiotic compounds like ethinylestradiol, equalenin, diethyl stilbesterol and 1-naphthol at significantly lower efficiency. Does not sulfonate cortisol, testosterone and dopamine. May play a role in gut microbiota-host metabolic interaction. O-sulfonates 4-ethylphenol (4-EP), a dietary tyrosine-derived metabolite produced by gut bacteria. The product 4-EPS crosses the blood-brain barrier and may negatively regulate oligodendrocyte maturation and myelination, affecting the functional connectivity of different brain regions associated with the limbic system. This chain is Sulfotransferase 1E1 (SULT1E1), found in Cavia porcellus (Guinea pig).